Here is a 119-residue protein sequence, read N- to C-terminus: Small ribosomal subunit protein bS16 (119 aa).

The interval 81 to 119 (GLAKRPARNNPKKAEPGQKAKERAAARAEKAGAGDDAAA) is disordered. The span at 92-113 (KKAEPGQKAKERAAARAEKAGA) shows a compositional bias: basic and acidic residues.

Belongs to the bacterial ribosomal protein bS16 family.

The polypeptide is Small ribosomal subunit protein bS16 (Methylobacterium sp. (strain 4-46)).